Here is a 533-residue protein sequence, read N- to C-terminus: Basal body-orientation factor 1 (533 aa).

Residues 1 to 30 (MPAKDKRKDKRKDKRKGKNKGKEPKKIIKS) are disordered. Over residues 7–19 (RKDKRKDKRKGKN) the composition is skewed to basic residues. Positions 20–30 (KGKEPKKIIKS) are enriched in basic and acidic residues. 2 coiled-coil regions span residues 34-207 (AIER…EAEK) and 246-368 (LKEA…VEQF). Positions 277–533 (VKEKIMQLTQ…PQGLQDSDIA (257 aa)) are interaction with MNS1 and ODF2. A compositionally biased stretch (polar residues) spans 507 to 517 (QQAPVSDSNRM). The interval 507–533 (QQAPVSDSNRMVSPDVIPQGLQDSDIA) is disordered.

Belongs to the BBOF1 family. Interacts with MNS1 and ODF2. In terms of tissue distribution, expressed exclusively in the testis and predominantly expressed in male germ cells.

It localises to the cytoplasm. The protein localises to the cytoskeleton. It is found in the cilium basal body. The protein resides in the flagellum axoneme. Its function is as follows. Plays an essential role in sperm motility and male fertility by stabilizing the sperm flagellar axonemal structure. May be required for the stability of ODF2 and MANS1 proteins. Dispensable for the assembly and function of motile cilia. This Mus musculus (Mouse) protein is Basal body-orientation factor 1.